A 270-amino-acid polypeptide reads, in one-letter code: Phosphodiesterase YaeI (270 aa).

Positions 56, 58, 88, 120, 209, and 211 each coordinate a divalent metal cation.

This sequence belongs to the metallophosphoesterase superfamily. The cofactor is a divalent metal cation.

Functionally, shows phosphodiesterase activity, hydrolyzing phosphodiester bond in the artificial chromogenic substrate bis-p-nitrophenyl phosphate (bis-pNPP). In Escherichia coli (strain K12), this protein is Phosphodiesterase YaeI (yaeI).